A 294-amino-acid chain; its full sequence is MLRARPSHRLASAAAVVAATGAALLAGSSPAAAATCSDVDVVFARGTGETPGLGVVGGPFVRSLTGELSDRTVTSHAVDYAASSSQASAGPGATAMSAHVREVAAACPSTRFVLGGYSQGATVTDIALGIRTGTTTGTPVPAELAGRVAAVVVFGNPLGLSGRTIATASSTYGPKSKDYCNSSDSVCGSAPKTGTGGHLSYASNGSTTDGARFAAGLVRAAGTPTTPTPTPTPTPVPTTCVRDSTRDHVAADRAVSLYGRAYARGSRDSLGATSSYNVVSLQQVEGGWRLVTAC.

A signal peptide spans 1 to 33; it reads MLRARPSHRLASAAAVVAATGAALLAGSSPAAA. Cys36 and Cys107 are joined by a disulfide. Ser118 (nucleophile) is an active-site residue. Residues Cys180 and Cys187 are joined by a disulfide bond. Residue Asp184 is part of the active site. His198 (proton donor/acceptor) is an active-site residue. The tract at residues 222 to 241 is disordered; the sequence is GTPTTPTPTPTPTPVPTTCV. Over residues 226 to 236 the composition is skewed to pro residues; it reads TPTPTPTPTPV. Residues 240–294 form a may be involved in substrate binding region; it reads CVRDSTRDHVAADRAVSLYGRAYARGSRDSLGATSSYNVVSLQQVEGGWRLVTAC.

Belongs to the cutinase family.

It is found in the secreted. It catalyses the reaction cutin + H2O = cutin monomers.. It carries out the reaction a tetradecanoate ester + H2O = an aliphatic alcohol + tetradecanoate + H(+). The enzyme catalyses hexadecanoate ester + H2O = an aliphatic alcohol + hexadecanoate + H(+). The catalysed reaction is a butanoate ester + H2O = an aliphatic alcohol + butanoate + H(+). It catalyses the reaction an octanoate ester + H2O = an aliphatic alcohol + octanoate + H(+). Functionally, catalyzes the hydrolysis of cutin, a polyester that forms the structure of plant cuticle. Shows esterase activity towards p-nitrophenol-linked aliphatic esters (pNP-aliphatic esters). Can depolymerize synthetic polyesters such as poly(epsilon-caprolactone) (PCL) and poly(1,3-propylene adipate) (PPA). Exhibits some activity on poly(lactic acid) (PLA). Can bind but not hydrolyze poly(hydroxybutyrate) (PHB). The sequence is that of Cutinase from Kineococcus radiotolerans (strain ATCC BAA-149 / DSM 14245 / SRS30216).